A 207-amino-acid chain; its full sequence is MPKVALYNNEGSQVGEITLDDSIFATDINETLMHEAVNMHLASKRRGTASAKTRSEVRGGGRKPWRQKGTGRARHGSIRSPIWVGGGISFAPKPRDYSYKMPKKAKRKAIKSALTTKLNNGEIVILEELTMEAPKTKKIIEMLENLSINHKAMIVTGASDLNVYRSTRNIPGVSSALANNLNVYDVLNHDYLVLTKDAVSVIEEVFC.

Residues 44–76 (KRRGTASAKTRSEVRGGGRKPWRQKGTGRARHG) form a disordered region. Over residues 60–76 (GGRKPWRQKGTGRARHG) the composition is skewed to basic residues.

It belongs to the universal ribosomal protein uL4 family. In terms of assembly, part of the 50S ribosomal subunit.

In terms of biological role, one of the primary rRNA binding proteins, this protein initially binds near the 5'-end of the 23S rRNA. It is important during the early stages of 50S assembly. It makes multiple contacts with different domains of the 23S rRNA in the assembled 50S subunit and ribosome. Forms part of the polypeptide exit tunnel. In Natranaerobius thermophilus (strain ATCC BAA-1301 / DSM 18059 / JW/NM-WN-LF), this protein is Large ribosomal subunit protein uL4.